The sequence spans 547 residues: Chaperonin GroEL (547 aa).

ATP contacts are provided by residues 30-33 (TLGP), lysine 51, 87-91 (DGTTT), glycine 415, and aspartate 496. Residues 527-547 (SDKAEPMPMRGGMGGMGGMDF) are disordered. Gly residues predominate over residues 537–547 (GGMGGMGGMDF).

The protein belongs to the chaperonin (HSP60) family. As to quaternary structure, forms a cylinder of 14 subunits composed of two heptameric rings stacked back-to-back. Interacts with the co-chaperonin GroES.

It is found in the cytoplasm. The catalysed reaction is ATP + H2O + a folded polypeptide = ADP + phosphate + an unfolded polypeptide.. In terms of biological role, together with its co-chaperonin GroES, plays an essential role in assisting protein folding. The GroEL-GroES system forms a nano-cage that allows encapsulation of the non-native substrate proteins and provides a physical environment optimized to promote and accelerate protein folding. The chain is Chaperonin GroEL from Rickettsia rickettsii (strain Sheila Smith).